A 287-amino-acid polypeptide reads, in one-letter code: Protease HtpX (287 aa).

The next 2 helical transmembrane spans lie at 4 to 24 (VLLFLATNMAILLVVSVVFNI) and 37 to 57 (VGLLVFCALFGFGGAFVSLWI). Residue His143 coordinates Zn(2+). Residue Glu144 is part of the active site. His147 provides a ligand contact to Zn(2+). Helical transmembrane passes span 158–178 (LIQGVINTFVMFFARIIASAI) and 194–214 (GVVMLLEIVFGVLASTIVMWF). Zn(2+) is bound at residue Glu219.

Belongs to the peptidase M48B family. Requires Zn(2+) as cofactor.

The protein resides in the cell inner membrane. The sequence is that of Protease HtpX from Idiomarina loihiensis (strain ATCC BAA-735 / DSM 15497 / L2-TR).